Reading from the N-terminus, the 391-residue chain is Formate-dependent phosphoribosylglycinamide formyltransferase (391 aa).

N(1)-(5-phospho-beta-D-ribosyl)glycinamide-binding positions include 20 to 21 (EL) and Glu80. Residues Arg112, Lys153, 158-163 (SSGKGQ), 193-196 (EGFV), and Glu201 each bind ATP. The ATP-grasp domain maps to 117 to 306 (RLAAETLGLP…EFALHVRAIL (190 aa)). Mg(2+) is bound by residues Glu265 and Glu277. N(1)-(5-phospho-beta-D-ribosyl)glycinamide is bound by residues Asp284, Lys354, and 361-362 (RR).

It belongs to the PurK/PurT family. Homodimer.

It catalyses the reaction N(1)-(5-phospho-beta-D-ribosyl)glycinamide + formate + ATP = N(2)-formyl-N(1)-(5-phospho-beta-D-ribosyl)glycinamide + ADP + phosphate + H(+). Its pathway is purine metabolism; IMP biosynthesis via de novo pathway; N(2)-formyl-N(1)-(5-phospho-D-ribosyl)glycinamide from N(1)-(5-phospho-D-ribosyl)glycinamide (formate route): step 1/1. Involved in the de novo purine biosynthesis. Catalyzes the transfer of formate to 5-phospho-ribosyl-glycinamide (GAR), producing 5-phospho-ribosyl-N-formylglycinamide (FGAR). Formate is provided by PurU via hydrolysis of 10-formyl-tetrahydrofolate. This Shewanella putrefaciens (strain CN-32 / ATCC BAA-453) protein is Formate-dependent phosphoribosylglycinamide formyltransferase.